The primary structure comprises 931 residues: Beta-mannosidase A (931 aa).

The N-terminal stretch at 1–21 (MRHSIGLAAALLAPTLPVALG) is a signal peptide. N-linked (GlcNAc...) asparagine glycosylation is found at Asn-40, Asn-79, Asn-247, Asn-282, and Asn-347. The active-site Proton donor is Glu-479. N-linked (GlcNAc...) asparagine glycosylation is found at Asn-550, Asn-608, Asn-658, Asn-738, Asn-790, Asn-798, Asn-830, and Asn-918.

This sequence belongs to the glycosyl hydrolase 2 family. Beta-mannosidase A subfamily. Homodimer. In terms of processing, N-glycosylated.

Its subcellular location is the secreted. The enzyme catalyses Hydrolysis of terminal, non-reducing beta-D-mannose residues in beta-D-mannosides.. The protein operates within glycan metabolism; N-glycan degradation. Exoglycosidase that cleaves the single beta-linked mannose residue from the non-reducing end of beta-mannosidic oligosaccharides of various complexity and length. Involved in the degradation of polymeric mannan and galactomannan. Releases the terminal mannose residue from mannobiose and mannotriose, as well as from galactosyl-mannobiose (GM2), galactosyl-mannotriose (GM3) and di-galactosyl-mannopentaose (G2M5). The protein is Beta-mannosidase A (mndA) of Aspergillus niger.